The chain runs to 122 residues: UPF0382 membrane protein SE_0353 (122 aa).

The next 4 membrane-spanning stretches (helical) occupy residues 3-23 (VFII…AFGA), 46-66 (MYHG…SINV), 69-89 (AGWL…FLAL), and 98-118 (ITPI…IATL).

This sequence belongs to the UPF0382 family.

Its subcellular location is the cell membrane. The sequence is that of UPF0382 membrane protein SE_0353 from Staphylococcus epidermidis (strain ATCC 12228 / FDA PCI 1200).